The sequence spans 443 residues: Probable glycine dehydrogenase (decarboxylating) subunit 1 (443 aa).

This sequence belongs to the GcvP family. N-terminal subunit subfamily. As to quaternary structure, the glycine cleavage system is composed of four proteins: P, T, L and H. In this organism, the P 'protein' is a heterodimer of two subunits.

The catalysed reaction is N(6)-[(R)-lipoyl]-L-lysyl-[glycine-cleavage complex H protein] + glycine + H(+) = N(6)-[(R)-S(8)-aminomethyldihydrolipoyl]-L-lysyl-[glycine-cleavage complex H protein] + CO2. Its function is as follows. The glycine cleavage system catalyzes the degradation of glycine. The P protein binds the alpha-amino group of glycine through its pyridoxal phosphate cofactor; CO(2) is released and the remaining methylamine moiety is then transferred to the lipoamide cofactor of the H protein. In Endomicrobium trichonymphae, this protein is Probable glycine dehydrogenase (decarboxylating) subunit 1.